Consider the following 462-residue polypeptide: L-seryl-tRNA(Sec) selenium transferase (462 aa).

N6-(pyridoxal phosphate)lysine is present on K293.

Belongs to the SelA family. Pyridoxal 5'-phosphate is required as a cofactor.

The protein resides in the cytoplasm. The catalysed reaction is L-seryl-tRNA(Sec) + selenophosphate + H(+) = L-selenocysteinyl-tRNA(Sec) + phosphate. Its pathway is aminoacyl-tRNA biosynthesis; selenocysteinyl-tRNA(Sec) biosynthesis; selenocysteinyl-tRNA(Sec) from L-seryl-tRNA(Sec) (bacterial route): step 1/1. Converts seryl-tRNA(Sec) to selenocysteinyl-tRNA(Sec) required for selenoprotein biosynthesis. The sequence is that of L-seryl-tRNA(Sec) selenium transferase from Clostridium botulinum (strain ATCC 19397 / Type A).